A 369-amino-acid polypeptide reads, in one-letter code: Anhydro-N-acetylmuramic acid kinase (369 aa).

12–19 contacts ATP; sequence GTSLDGVD.

Belongs to the anhydro-N-acetylmuramic acid kinase family.

The enzyme catalyses 1,6-anhydro-N-acetyl-beta-muramate + ATP + H2O = N-acetyl-D-muramate 6-phosphate + ADP + H(+). It participates in amino-sugar metabolism; 1,6-anhydro-N-acetylmuramate degradation. It functions in the pathway cell wall biogenesis; peptidoglycan recycling. In terms of biological role, catalyzes the specific phosphorylation of 1,6-anhydro-N-acetylmuramic acid (anhMurNAc) with the simultaneous cleavage of the 1,6-anhydro ring, generating MurNAc-6-P. Is required for the utilization of anhMurNAc either imported from the medium or derived from its own cell wall murein, and thus plays a role in cell wall recycling. This chain is Anhydro-N-acetylmuramic acid kinase, found in Escherichia coli O81 (strain ED1a).